The chain runs to 575 residues: Beta-amylase 1, chloroplastic (575 aa).

A chloroplast-targeting transit peptide spans 1 to 41 (MALNLSHQLGVLAGTPIKSGEMTDSSLLSISPPSARMMTPK). Residues S55 and S59 each carry the phosphoserine modification. An intrachain disulfide couples C73 to C511. Positions 147, 187, and 195 each coordinate substrate. E279 serves as the catalytic Proton donor. Substrate is bound by residues K392, H397, and T439. The active-site Proton acceptor is the E477. Substrate-binding positions include 478-479 (NA) and R517.

It belongs to the glycosyl hydrolase 14 family. As to expression, expressed in leaves, roots, flowers, pollen, and seeds.

The protein resides in the plastid. It is found in the chloroplast. The enzyme catalyses Hydrolysis of (1-&gt;4)-alpha-D-glucosidic linkages in polysaccharides so as to remove successive maltose units from the non-reducing ends of the chains.. With respect to regulation, redox regulation; active in reducing conditions, inactive in oxidizing conditions. Thioredoxins f1, m1, and y1 mediate the reversible reductive activation of oxidized BAM1. In terms of biological role, beta-amylase activity. Can use p-nitrophenyl maltopentaoside (PNPG5) as substrate only in reduced form. Can play a minor role in the starch degradation and maltose metabolism in chloroplasts during the night. More active on phosphorylated glucan. Interacts directly with starch or other alpha-1,4-glucan. This Arabidopsis thaliana (Mouse-ear cress) protein is Beta-amylase 1, chloroplastic (BAM1).